Reading from the N-terminus, the 181-residue chain is NADH-quinone oxidoreductase subunit I (181 aa).

4Fe-4S ferredoxin-type domains are found at residues 44 to 74 and 90 to 119; these read LNRY…VEGA and RVYQ…MTND. Residues Cys-54, Cys-57, Cys-60, Cys-64, Cys-99, Cys-102, Cys-105, and Cys-109 each coordinate [4Fe-4S] cluster.

The protein belongs to the complex I 23 kDa subunit family. NDH-1 is composed of 14 different subunits. Subunits NuoA, H, J, K, L, M, N constitute the membrane sector of the complex. The cofactor is [4Fe-4S] cluster.

The protein resides in the cell membrane. It carries out the reaction a quinone + NADH + 5 H(+)(in) = a quinol + NAD(+) + 4 H(+)(out). Functionally, NDH-1 shuttles electrons from NADH, via FMN and iron-sulfur (Fe-S) centers, to quinones in the respiratory chain. The immediate electron acceptor for the enzyme in this species is believed to be menaquinone. Couples the redox reaction to proton translocation (for every two electrons transferred, four hydrogen ions are translocated across the cytoplasmic membrane), and thus conserves the redox energy in a proton gradient. This is NADH-quinone oxidoreductase subunit I from Mycobacterium marinum (strain ATCC BAA-535 / M).